A 440-amino-acid polypeptide reads, in one-letter code: 3-phosphoshikimate 1-carboxyvinyltransferase (440 aa).

3 residues coordinate 3-phosphoshikimate: lysine 26, serine 27, and arginine 31. Lysine 26 contributes to the phosphoenolpyruvate binding site. The phosphoenolpyruvate site is built by glycine 99 and arginine 127. The 3-phosphoshikimate site is built by serine 172, glutamine 174, aspartate 320, and lysine 347. Glutamine 174 contacts phosphoenolpyruvate. Residue aspartate 320 is the Proton acceptor of the active site. 2 residues coordinate phosphoenolpyruvate: arginine 351 and arginine 392.

This sequence belongs to the EPSP synthase family. As to quaternary structure, monomer.

It is found in the cytoplasm. The catalysed reaction is 3-phosphoshikimate + phosphoenolpyruvate = 5-O-(1-carboxyvinyl)-3-phosphoshikimate + phosphate. The protein operates within metabolic intermediate biosynthesis; chorismate biosynthesis; chorismate from D-erythrose 4-phosphate and phosphoenolpyruvate: step 6/7. Catalyzes the transfer of the enolpyruvyl moiety of phosphoenolpyruvate (PEP) to the 5-hydroxyl of shikimate-3-phosphate (S3P) to produce enolpyruvyl shikimate-3-phosphate and inorganic phosphate. This chain is 3-phosphoshikimate 1-carboxyvinyltransferase, found in Xanthomonas euvesicatoria pv. vesicatoria (strain 85-10) (Xanthomonas campestris pv. vesicatoria).